A 1155-amino-acid chain; its full sequence is DNA-directed RNA polymerase subunit beta (1155 aa).

The protein belongs to the RNA polymerase beta chain family. The RNAP catalytic core consists of 2 alpha, 1 beta, 1 beta' and 1 omega subunit. When a sigma factor is associated with the core the holoenzyme is formed, which can initiate transcription.

The catalysed reaction is RNA(n) + a ribonucleoside 5'-triphosphate = RNA(n+1) + diphosphate. Its function is as follows. DNA-dependent RNA polymerase catalyzes the transcription of DNA into RNA using the four ribonucleoside triphosphates as substrates. This is DNA-directed RNA polymerase subunit beta from Borrelia garinii subsp. bavariensis (strain ATCC BAA-2496 / DSM 23469 / PBi) (Borreliella bavariensis).